Consider the following 734-residue polypeptide: Putative K(+)-stimulated pyrophosphate-energized sodium pump (734 aa).

5 helical membrane passes run S3–F23, I58–H78, V82–G102, V134–L154, and L169–F189. K199 contacts substrate. Residues D202, D206, N229, and D232 each coordinate Mg(2+). 7 helical membrane-spanning segments follow: residues L244–I264, A275–F295, F314–L334, L336–I356, S377–T397, A398–F418, and V423–I443. D455 lines the Mg(2+) pocket. 4 helical membrane-spanning segments follow: residues F491–I511, G557–G577, I629–I649, and G650–D670. Residues D670, D696, and D700 each contribute to the Ca(2+) site. Residue K703 coordinates substrate. The chain crosses the membrane as a helical span at residues I712 to S732.

It belongs to the H(+)-translocating pyrophosphatase (TC 3.A.10) family. K(+)-stimulated subfamily. As to quaternary structure, homodimer. Requires Mg(2+) as cofactor.

Its subcellular location is the cell inner membrane. It catalyses the reaction Na(+)(in) + diphosphate + H2O = Na(+)(out) + 2 phosphate + H(+). Requires K(+) for maximal activity. Its function is as follows. Sodium pump that utilizes the energy of pyrophosphate hydrolysis as the driving force for Na(+) movement across the membrane. In Bacteroides thetaiotaomicron (strain ATCC 29148 / DSM 2079 / JCM 5827 / CCUG 10774 / NCTC 10582 / VPI-5482 / E50), this protein is Putative K(+)-stimulated pyrophosphate-energized sodium pump.